A 314-amino-acid polypeptide reads, in one-letter code: Olfactory receptor 5I1 (314 aa).

At 1–27 (MEFTDRNYTLVTEFILLGFPTRPELQI) the chain is on the extracellular side. An N-linked (GlcNAc...) asparagine glycan is attached at N7. Residues 28–48 (VLFLMFLTLYAIILIGNIGLM) form a helical membrane-spanning segment. The Cytoplasmic portion of the chain corresponds to 49-56 (LLIRIDPH). The helical transmembrane segment at 57–77 (LQTPMYFFLSNLSFVDLCYFS) threads the bilayer. The Extracellular segment spans residues 78–101 (DIVPKMLVNFLSENKSISYYGCAL). Cysteines 99 and 191 form a disulfide. A helical membrane pass occupies residues 102–122 (QFYFFCTFADTESFILAAMAY). Topologically, residues 123–141 (DRYVAICNPLLYTVVMSRG) are cytoplasmic. A helical membrane pass occupies residues 142 to 162 (ICMRLIVLSYLGGNMSSLVHT). Over 163–198 (SFAFILKYCDKNVINHFFCDLPPLLKLSCTDTTINE) the chain is Extracellular. A helical membrane pass occupies residues 199-219 (WLLSTYGSSVEIICFIIIIIS). Over 220–239 (YFFILLSVLKIRSFSGRKKT) the chain is Cytoplasmic. A helical transmembrane segment spans residues 240–260 (FSTCASHLTSVTIYQGTLLFI). The Extracellular segment spans residues 261–273 (YSRPSYLYSPNTD). The chain crosses the membrane as a helical span at residues 274 to 294 (KIISVFYTIFIPVLNPLIYSL). Topologically, residues 295–314 (RNKDVKDAAEKVLRSKVDSS) are cytoplasmic.

The protein belongs to the G-protein coupled receptor 1 family.

The protein resides in the cell membrane. Functionally, odorant receptor. The protein is Olfactory receptor 5I1 (OR5I1) of Homo sapiens (Human).